The sequence spans 417 residues: Diphosphomevalonate decarboxylase 1 (417 aa).

Residue 22–25 coordinates (R)-5-diphosphomevalonate; it reads YWGK. A Peroxisomal targeting signal PTS2 motif is present at residues 39-47; sequence RVSLDPDHL. Residues Arg77, 160–165, and Thr216 contribute to the (R)-5-diphosphomevalonate site; that span reads SGSACR.

The protein belongs to the diphosphomevalonate decarboxylase family. As to quaternary structure, homodimer.

It is found in the peroxisome. It catalyses the reaction (R)-5-diphosphomevalonate + ATP = isopentenyl diphosphate + ADP + phosphate + CO2. It participates in isoprenoid biosynthesis; isopentenyl diphosphate biosynthesis via mevalonate pathway; isopentenyl diphosphate from (R)-mevalonate: step 3/3. Functionally, performs the first committed step in the biosynthesis of isoprene-containing compounds such as sterols and terpenoids. Component of the triterpene saponins (e.g. ginsenosides or panaxosides) and phytosterols biosynthetic pathways. Catalyzes the conversion of mevalonate diphosphate to isopentenyl diphosphate (IPP). In Panax ginseng (Korean ginseng), this protein is Diphosphomevalonate decarboxylase 1.